Reading from the N-terminus, the 448-residue chain is MLLLRRLNRVRIASPYSVRLLSVKPISNVDDAKFRSQEEEDQSSYDQKTVCEALTCYSNDWQKALEFFNWVERESGFRHTTETFNRVIDILGKYFEFEISWALINRMIGNTESVPNHVTFRIVFKRYVTAHLVQEAIDAYDKLDDFNLRDETSFYNLVDALCEHKHVVEAEELCFGKNVIGNGFSVSNTKIHNLILRGWSKLGWWGKCKEYWKKMDTEGVTKDLFSYSIYMDIMCKSGKPWKAVKLYKEMKSRRMKLDVVAYNTVIRAIGASQGVEFGIRVFREMRERGCEPNVATHNTIIKLLCEDGRMRDAYRMLDEMPKRGCQPDSITYMCLFSRLEKPSEILSLFGRMIRSGVRPKMDTYVMLMRKFERWGFLQPVLYVWKTMKESGDTPDSAAYNAVIDALIQKGMLDMAREYEEEMIERGLSPRRRPELVEKSLDETLVCRE.

A mitochondrion-targeting transit peptide spans 1-21; that stretch reads MLLLRRLNRVRIASPYSVRLL. PPR repeat units lie at residues 80–110, 116–146, 150–186, 188–222, 223–257, 258–292, 293–327, 331–359, 360–394, and 395–429; these read TTET…MIGN, NHVT…LDDF, DETS…GFSV, NTKI…GVTK, DLFS…RMKL, DVVA…GCEP, NVAT…GCQP, TYMC…GVRP, KMDT…GDTP, and DSAA…GLSP.

Belongs to the PPR family. P subfamily.

It localises to the mitochondrion. The sequence is that of Pentatricopeptide repeat-containing protein At1g80550, mitochondrial from Arabidopsis thaliana (Mouse-ear cress).